Reading from the N-terminus, the 76-residue chain is uncharacterized protein (76 aa).

To K.pneumoniae LtrA, E.coli YjiE, and YhcS.

This is an uncharacterized protein from Escherichia coli O6:H1 (strain CFT073 / ATCC 700928 / UPEC).